Consider the following 305-residue polypeptide: Ribosomal RNA small subunit methyltransferase H (305 aa).

Residues 33-35, Asp-51, Phe-82, Asp-96, and Gln-103 each bind S-adenosyl-L-methionine; that span reads GGY.

It belongs to the methyltransferase superfamily. RsmH family.

It localises to the cytoplasm. The catalysed reaction is cytidine(1402) in 16S rRNA + S-adenosyl-L-methionine = N(4)-methylcytidine(1402) in 16S rRNA + S-adenosyl-L-homocysteine + H(+). Its function is as follows. Specifically methylates the N4 position of cytidine in position 1402 (C1402) of 16S rRNA. The protein is Ribosomal RNA small subunit methyltransferase H of Rickettsia bellii (strain OSU 85-389).